Consider the following 329-residue polypeptide: Olfactory receptor 10J3 (329 aa).

The Extracellular segment spans residues 1–26 (MPKLNSTFVTEFLFEGFSSFRRQHKL). The N-linked (GlcNAc...) asparagine glycan is linked to Asn5. The helical transmembrane segment at 27 to 47 (VFFVVFLTLYLLTLSGNVIIM) threads the bilayer. The Cytoplasmic portion of the chain corresponds to 48–55 (TIIRLDHH). The chain crosses the membrane as a helical span at residues 56–76 (LHTPMYFFLCMLSISETCYTV). Over 77–100 (AIIPHMLSGLLNPHQPIATQSCAT) the chain is Extracellular. A disulfide bridge links Cys98 with Cys190. Residues 101–121 (QLFFYLTFGINNCFLLTVMGY) form a helical membrane-spanning segment. Over 122-140 (DRYVAICNPLRYSVIMGKR) the chain is Cytoplasmic. A helical transmembrane segment spans residues 141-161 (ACIQLASGSLGIGLGMAIVQV). Residues 162–198 (TSVFGLPFCDAFVISHFFCDVRHLLKLACTDTTVNEI) lie on the Extracellular side of the membrane. A helical transmembrane segment spans residues 199 to 218 (INFVVSVCVLVLPMGLVFIS). Over 219-238 (YVLIISTILKIASAEGQKKA) the chain is Cytoplasmic. The chain crosses the membrane as a helical span at residues 239–259 (FATCASHLTVVIIHYGCASII). Over 260-272 (YLKPKSQSSLGQD) the chain is Extracellular. A helical transmembrane segment spans residues 273–293 (RLISVTYTHHSPTEPCCVQPE). Over 294 to 329 (EQGGQRCSAQSRGAKNSVSLMKRGCEGFSFAFINMY) the chain is Cytoplasmic.

Belongs to the G-protein coupled receptor 1 family.

The protein resides in the cell membrane. In terms of biological role, odorant receptor. This Homo sapiens (Human) protein is Olfactory receptor 10J3 (OR10J3).